Reading from the N-terminus, the 326-residue chain is GRIGRLVARVALQRDDVELVAVNDPFISTDYMTYMFKYDSVHGQWKHHELKVKDEKTLLFGEKSVRVFGIRNPEEIPWAEAGADFVVESTGVFTDKDKAAAHLKGGAKKVVISAPSKDAPMFVVGVNEKEYKPEYDIVSNASCTTNCLAPLAKVINDRFGIVEGLMTTVHSLTATQKTVDGPSMKDWRGGRATSFNIIPSSTGAAKAVGKVLPALNGKLTGMAFRVPTVDVSVVDLTVRLEKEASYDDIKAAIKEESEGKLKGILGFTEDDVVSTDFVGDSRSSIFDAKAGIALSKNFVKLVSWYDNEWGYSSRVIDLICHMASVA.

NAD(+) is bound by residues 2–3 (RI), Asp24, and Arg71. D-glyceraldehyde 3-phosphate is bound by residues 142–144 (SCT), Thr173, 202–203 (TG), and Arg225. Residue Cys143 is the Nucleophile of the active site. An NAD(+)-binding site is contributed by Asn307.

This sequence belongs to the glyceraldehyde-3-phosphate dehydrogenase family.

The protein resides in the cytoplasm. It carries out the reaction D-glyceraldehyde 3-phosphate + phosphate + NAD(+) = (2R)-3-phospho-glyceroyl phosphate + NADH + H(+). The protein operates within carbohydrate degradation; glycolysis; pyruvate from D-glyceraldehyde 3-phosphate: step 1/5. Key enzyme in glycolysis that catalyzes the first step of the pathway by converting D-glyceraldehyde 3-phosphate (G3P) into 3-phospho-D-glyceroyl phosphate. Essential for the maintenance of cellular ATP levels and carbohydrate metabolism. This Nicotiana tabacum (Common tobacco) protein is Glyceraldehyde-3-phosphate dehydrogenase, cytosolic (GAPC).